The following is a 165-amino-acid chain: Protein SprT (165 aa).

The SprT-like domain occupies 22–163; sequence LAQANLKLGC…RCVHCGEQLV (142 aa). Position 78 (histidine 78) interacts with Zn(2+). Residue glutamate 79 is part of the active site. Histidine 82 provides a ligand contact to Zn(2+).

The protein belongs to the SprT family. Zn(2+) is required as a cofactor.

The protein resides in the cytoplasm. This chain is Protein SprT, found in Shigella dysenteriae serotype 1 (strain Sd197).